Here is a 159-residue protein sequence, read N- to C-terminus: RxLR effector protein 24 (159 aa).

Residues 1-18 form the signal peptide; it reads MRFLVWVFFVGLVTFVSG. The short motif at 58-82 is the RxLR-dEER element; sequence RFLRSNANQDLTTANDDSDVKEEER. The tract at residues 109–159 is RABA-binding domain; it reads EKAFQHMMKQGETPTSLAKRLEIGGAAELRYEKVYEKYTAWWINYHTVAGT.

Belongs to the RxLR effector family. As to quaternary structure, interacts with potato RABA GTPases including RABA1a, RABA2a and RABA4a.

It localises to the secreted. The protein resides in the host cell membrane. It is found in the host endomembrane system. In terms of biological role, effector protein that contributes to pathogen virulence. Targets members of the RABA GTPases subfamily to inhibit vesicular secretion, leading to an accumulation of secretory proteins in the endoplasmic reticulum. In Phytophthora infestans (strain T30-4) (Potato late blight agent), this protein is RxLR effector protein 24.